A 502-amino-acid polypeptide reads, in one-letter code: Putative diacyglycerol O-acyltransferase Rv1760 (502 aa).

H174 serves as the catalytic Proton acceptor.

This sequence belongs to the long-chain O-acyltransferase family.

It catalyses the reaction an acyl-CoA + a 1,2-diacyl-sn-glycerol = a triacyl-sn-glycerol + CoA. The enzyme catalyses di-(9Z)-octadecenoylglycerol + (9Z)-octadecenoyl-CoA = 1,2,3-tri-(9Z-octadecenoyl)-glycerol + CoA. The protein operates within glycerolipid metabolism; triacylglycerol biosynthesis. Its function is as follows. Catalyzes the terminal and only committed step in triacylglycerol synthesis by using diacylglycerol and fatty acyl CoA as substrates. Required for storage lipid synthesis. Upon expression in E.coli functions weakly as a triacylglycerol synthase, making triacylglycerol (TG) from diolein and long-chain fatty acyl-CoA. Has very weak wax synthase activity, incorporating palmityl alcohol into wax esters in the presence of palmitoyl-CoA. The polypeptide is Putative diacyglycerol O-acyltransferase Rv1760 (Mycobacterium tuberculosis (strain ATCC 25618 / H37Rv)).